Reading from the N-terminus, the 368-residue chain is Mitogen-activated protein kinase KSS1 (368 aa).

The 301-residue stretch at 13–313 (YKLVDLIGEG…AAEALRHPYL (301 aa)) folds into the Protein kinase domain. Residues 19 to 27 (IGEGAYGTV) and Lys42 each bind ATP. The active-site Proton acceptor is the Asp143. Phosphothreonine is present on Thr183. Residues 183–185 (TEY) carry the TXY motif. Tyr185 carries the post-translational modification Phosphotyrosine.

The protein belongs to the protein kinase superfamily. Ser/Thr protein kinase family. MAP kinase subfamily. HOG1 sub-subfamily. In the nucleus, KSS1 forms a complex with DIG1, DIG2 and STE12; in contrast to FUS3 the interaction of KSS1 with STE12 does not depend on DIG1 and DIG2. Phosphorylated KSS1 shows reduced interaction with STE12. During pheromone activation and phosphorylation, KSS1 forms a membrane-associated complex with the scaffold protein STE5, the MAPKK STE7, the MAPKKK STE11, and the G-protein beta subunit GBB/STE4; interacting directly with POF1, STE7 and STE5 proteins. Mg(2+) is required as a cofactor. Dually phosphorylated on Thr-183 and Tyr-185 by STE7 in response to pheromone or carbon/nitrogen limitation, which activates the enzyme. Activated FUS3 down-regulates KSS1 phosphorylation.

Its subcellular location is the nucleus. The protein resides in the cytoplasm. The protein localises to the periplasm. The enzyme catalyses L-seryl-[protein] + ATP = O-phospho-L-seryl-[protein] + ADP + H(+). The catalysed reaction is L-threonyl-[protein] + ATP = O-phospho-L-threonyl-[protein] + ADP + H(+). Activated by tyrosine and threonine phosphorylation after pheromone treatment or carbon/nitrogen limitation. In terms of biological role, together with closely related FUS3, KSS1 is the final kinase in the signal transduction cascade regulating activation/repression of the mating and filamentation pathways, induced by pheromone and nitrogen/carbon limitation, respectively. Phosphorylated KSS1 activates both pathways, whereas activated FUS3 activates the mating but suppresses the filamentation pathway. KSS1 activity is down-regulated by FUS3 during pheromone induction to prevent inappropriate activation of the filamentation pathway. During induction of filamentation, KSS1 activates the transcription factor STE12 resulting in its binding to and activation of filamentation specific genes. Non-activated KSS1 has a kinase-independent repressive effect on STE12 transcriptional activity, that is mediated by direct binding to STE12 and depends on the presence of DIG1 and DIG2, and that is required for the suppression of filamentation under normal growth conditions. SSN3/SRB10 contributes further to the suppression of filamentation under these conditions by reducing STE12 stability independent of KSS1. FUS3 can partially compensate for the lack of KSS1 but filamentation becomes constitutively induced at a low level in the absence of any signal. KSS1 phosphorylates STE7, STE5, FAR1, DIG1, DIG2, STE12, and SST2. This is Mitogen-activated protein kinase KSS1 (KSS1) from Saccharomyces cerevisiae (strain ATCC 204508 / S288c) (Baker's yeast).